Here is a 329-residue protein sequence, read N- to C-terminus: Probable ABC transporter permease protein MG188 (329 aa).

6 consecutive transmembrane segments (helical) span residues 30–50 (FLLF…PFFL), 96–116 (LISL…IVFV), 128–148 (VFFL…VYIF), 176–196 (ALWA…VLII), 234–254 (LIFL…LALF), and 283–303 (NLAG…GLVL). The region spanning 88–303 (LRNSFLYSLI…VLGVCYGLVL (216 aa)) is the ABC transmembrane type-1 domain.

It belongs to the binding-protein-dependent transport system permease family. MalFG subfamily.

The protein resides in the cell membrane. Probably part of a binding-protein-dependent transport system. Probably responsible for the translocation of the substrate across the membrane. This Mycoplasma genitalium (strain ATCC 33530 / DSM 19775 / NCTC 10195 / G37) (Mycoplasmoides genitalium) protein is Probable ABC transporter permease protein MG188.